A 971-amino-acid polypeptide reads, in one-letter code: Exportin-2 (971 aa).

At M1 the chain carries N-acetylmethionine. Residues A29–S102 form the Importin N-terminal domain. Phosphoserine is present on S112. Residues K574 and K824 each carry the N6-acetyllysine modification. At S931 the chain carries Phosphoserine.

The protein belongs to the XPO2/CSE1 family. Found in a complex with CSE1L/XPO2, Ran and KPNA2. Binds with high affinity to importin-alpha only in the presence of RanGTP. The complex is dissociated by the combined action of RanBP1 and RanGAP1. Interacts with CFTR. Ubiquitous. Detected in embryos from 5 to 17 dpc. Highly expressed in adult testis, heart, brain, lung, liver, skeletal muscle, spleen and kidney.

The protein localises to the cytoplasm. The protein resides in the nucleus. Functionally, export receptor for importin-alpha. Mediates importin-alpha re-export from the nucleus to the cytoplasm after import substrates (cargos) have been released into the nucleoplasm. In the nucleus binds cooperatively to importin-alpha and to the GTPase Ran in its active GTP-bound form. Docking of this trimeric complex to the nuclear pore complex (NPC) is mediated through binding to nucleoporins. Upon transit of a nuclear export complex into the cytoplasm, disassembling of the complex and hydrolysis of Ran-GTP to Ran-GDP (induced by RANBP1 and RANGAP1, respectively) cause release of the importin-alpha from the export receptor. CSE1L/XPO2 then return to the nuclear compartment and mediate another round of transport. The directionality of nuclear export is thought to be conferred by an asymmetric distribution of the GTP- and GDP-bound forms of Ran between the cytoplasm and nucleus. The chain is Exportin-2 (Cse1l) from Mus musculus (Mouse).